Reading from the N-terminus, the 189-residue chain is Isopentenyl-diphosphate Delta-isomerase 2 (189 aa).

The Mn(2+) site is built by His24 and His30. The region spanning Ala28 to Ala160 is the Nudix hydrolase domain. Cys65 is an active-site residue. Cys65 lines the Mg(2+) pocket. Residue His67 coordinates Mn(2+). Glu85 is a binding site for Mg(2+). Mn(2+)-binding residues include Glu110 and Glu112. Glu112 is a catalytic residue.

Belongs to the IPP isomerase type 1 family. Mg(2+) serves as cofactor. The cofactor is Mn(2+).

The protein resides in the cytoplasm. The enzyme catalyses isopentenyl diphosphate = dimethylallyl diphosphate. Its pathway is isoprenoid biosynthesis; dimethylallyl diphosphate biosynthesis; dimethylallyl diphosphate from isopentenyl diphosphate: step 1/1. Catalyzes the 1,3-allylic rearrangement of the homoallylic substrate isopentenyl (IPP) to its highly electrophilic allylic isomer, dimethylallyl diphosphate (DMAPP). The polypeptide is Isopentenyl-diphosphate Delta-isomerase 2 (Aromatoleum aromaticum (strain DSM 19018 / LMG 30748 / EbN1) (Azoarcus sp. (strain EbN1))).